A 72-amino-acid polypeptide reads, in one-letter code: Aurein-2.2 (72 aa).

Positions 1 to 22 (MAFLKKSLFLVLFLGLVSLSIC) are cleaved as a signal peptide. Positions 23 to 49 (EKEKRQNEEDEDENEAANHEEGSEEKR) are excised as a propeptide. Residues 27–47 (RQNEEDEDENEAANHEEGSEE) form a disordered region. The span at 38-47 (AANHEEGSEE) shows a compositional bias: basic and acidic residues. Leu65 carries the post-translational modification Leucine amide. A propeptide spanning residues 69–72 (NDLE) is cleaved from the precursor.

Post-translationally, amidation is essential for antibacterial activity against Gram-positive bacteria. In terms of tissue distribution, expressed by the skin dorsal glands.

It localises to the secreted. The protein localises to the target cell membrane. In terms of biological role, amphipathic alpha-helical antimicrobial peptide with weak to moderate activity against Gram-positive bacteria, and no activity against Gram-negative bacteria. Probably acts by disturbing membrane functions with its amphipathic structure. Strongly inhibits the formation of NO by neuronal nitric oxide synthase (nNOS) at micromolar concentrations. Acts by a non-competitive mechanism, probably by binding to calcium/calmodulin and as a consequence blocking calmodulin attachment to nNOS. This Ranoidea aurea (Green and golden bell frog) protein is Aurein-2.2.